Consider the following 91-residue polypeptide: Acylphosphatase (91 aa).

The region spanning 3–91 (KLRMNVQGRV…EETEQFKVIQ (89 aa)) is the Acylphosphatase-like domain. Catalysis depends on residues arginine 18 and asparagine 36.

The protein belongs to the acylphosphatase family.

It carries out the reaction an acyl phosphate + H2O = a carboxylate + phosphate + H(+). This Enterococcus faecalis (strain ATCC 700802 / V583) protein is Acylphosphatase (acyP).